The chain runs to 122 residues: Large ribosomal subunit protein uL14 (122 aa).

The protein belongs to the universal ribosomal protein uL14 family. In terms of assembly, part of the 50S ribosomal subunit. Forms a cluster with proteins L3 and L19. In the 70S ribosome, L14 and L19 interact and together make contacts with the 16S rRNA in bridges B5 and B8.

Its function is as follows. Binds to 23S rRNA. Forms part of two intersubunit bridges in the 70S ribosome. This chain is Large ribosomal subunit protein uL14, found in Gluconacetobacter diazotrophicus (strain ATCC 49037 / DSM 5601 / CCUG 37298 / CIP 103539 / LMG 7603 / PAl5).